The primary structure comprises 160 residues: ATP synthase subunit b (160 aa).

Residues 15–35 (LAIVIGVLFWFLRGFLGGILE) traverse the membrane as a helical segment.

Belongs to the ATPase B chain family. In terms of assembly, F-type ATPases have 2 components, F(1) - the catalytic core - and F(0) - the membrane proton channel. F(1) has five subunits: alpha(3), beta(3), gamma(1), delta(1), epsilon(1). F(0) has four main subunits: a(1), b(1), b'(1) and c(10-14). The alpha and beta chains form an alternating ring which encloses part of the gamma chain. F(1) is attached to F(0) by a central stalk formed by the gamma and epsilon chains, while a peripheral stalk is formed by the delta, b and b' chains.

Its subcellular location is the cellular thylakoid membrane. Its function is as follows. F(1)F(0) ATP synthase produces ATP from ADP in the presence of a proton or sodium gradient. F-type ATPases consist of two structural domains, F(1) containing the extramembraneous catalytic core and F(0) containing the membrane proton channel, linked together by a central stalk and a peripheral stalk. During catalysis, ATP synthesis in the catalytic domain of F(1) is coupled via a rotary mechanism of the central stalk subunits to proton translocation. Component of the F(0) channel, it forms part of the peripheral stalk, linking F(1) to F(0). In Synechococcus sp. (strain CC9902), this protein is ATP synthase subunit b.